Reading from the N-terminus, the 374-residue chain is P2Y purinoceptor 11 (374 aa).

The Extracellular segment spans residues 1–29 (MAANVSGAKSCPANFLAAADDKLSGFQGD). An N-linked (GlcNAc...) asparagine glycan is attached at N4. Residues 30–50 (FLWPILVVEFLVAVASNGLAL) traverse the membrane as a helical segment. Residues 51 to 64 (YRFSIRKQRPWHPA) are Cytoplasmic-facing. Residues 65-85 (VVFSVQLAVSDLLCALTLPPL) form a helical membrane-spanning segment. The Extracellular portion of the chain corresponds to 86–116 (AAYLYPPKHWRYGEAACRLERFLFTCNLLGS). An intrachain disulfide couples C102 to C180. Residues 117-137 (VIFITCISLNRYLGIVHPFFA) form a helical membrane-spanning segment. Residues 138–146 (RSHLRPKHA) lie on the Cytoplasmic side of the membrane. The helical transmembrane segment at 147–167 (WAVSAAGWVLAALLAMPTLSF) threads the bilayer. The Extracellular segment spans residues 168–206 (SHLKRPQQGAGNCSVARPEACIKCLGTADHGLAAYRAYS). N179 carries an N-linked (GlcNAc...) asparagine glycan. Residues 207–227 (LVLAGLGCGLPLLLTLAAYGA) form a helical membrane-spanning segment. At 228–245 (LGRAVLRSPGMTVAEKLR) the chain is on the cytoplasmic side. Residues 246–266 (VAALVASGVALYASSYVPYHI) form a helical membrane-spanning segment. Residues 267–308 (MRVLNVDARRRWSTRCPSFADIAQATAALELGPYVGYQVMRG) are Extracellular-facing. A helical transmembrane segment spans residues 309–329 (LMPLAFCVHPLLYMAAVPSLG). The Cytoplasmic portion of the chain corresponds to 330-374 (CCCRHCPGYRDSWNPEDAKSTGQALPLNATAAPKPSEPQSRELSQ). The tract at residues 345 to 374 (EDAKSTGQALPLNATAAPKPSEPQSRELSQ) is disordered.

The protein belongs to the G-protein coupled receptor 1 family. Highest expression in liver and spleen.

The protein localises to the cell membrane. Its function is as follows. Receptor for ATP and ADP coupled to G-proteins that activate both phosphatidylinositol-calcium and adenylyl cyclase second messenger systems. Not activated by UTP or UDP. This chain is P2Y purinoceptor 11 (P2RY11), found in Homo sapiens (Human).